Reading from the N-terminus, the 204-residue chain is Per os infectivity factor 3 (204 aa).

As to quaternary structure, forms the PIF complex together with PIF1 and PIF2. The complex also interacts with per os infectivity factor PIF0.

Functionally, per os factor that plays a role in the initiation of host midgut infection. Unlike PIF1 and PIF2, PIF3 is not involved in specific binding of occluded virions (ODV) to the host midgut target cells. This is Per os infectivity factor 3 (AC115) from Lepidoptera (butterflies and moths).